The primary structure comprises 292 residues: uncharacterized protein (292 aa).

A helical membrane pass occupies residues S17 to M37.

To M.jannaschii MJ0137.

The protein resides in the membrane. This is an uncharacterized protein from Methanocaldococcus jannaschii (strain ATCC 43067 / DSM 2661 / JAL-1 / JCM 10045 / NBRC 100440) (Methanococcus jannaschii).